A 498-amino-acid polypeptide reads, in one-letter code: Glycerol kinase (498 aa).

Thr-12 is an ADP binding site. Residues Thr-12, Thr-13, and Ser-14 each contribute to the ATP site. Thr-12 lines the sn-glycerol 3-phosphate pocket. Position 16 (Arg-16) interacts with ADP. Sn-glycerol 3-phosphate is bound by residues Arg-82, Glu-83, Tyr-135, and Asp-245. Residues Arg-82, Glu-83, Tyr-135, Asp-245, and Gln-246 each contribute to the glycerol site. Residues Thr-267 and Gly-310 each contribute to the ADP site. The ATP site is built by Thr-267, Gly-310, Gln-314, and Gly-411. The ADP site is built by Gly-411 and Asn-415.

It belongs to the FGGY kinase family. Homotetramer and homodimer (in equilibrium).

It carries out the reaction glycerol + ATP = sn-glycerol 3-phosphate + ADP + H(+). Its pathway is polyol metabolism; glycerol degradation via glycerol kinase pathway; sn-glycerol 3-phosphate from glycerol: step 1/1. Its activity is regulated as follows. Activated by phosphorylation and inhibited by fructose 1,6-bisphosphate (FBP). Key enzyme in the regulation of glycerol uptake and metabolism. Catalyzes the phosphorylation of glycerol to yield sn-glycerol 3-phosphate. This Clostridium botulinum (strain Eklund 17B / Type B) protein is Glycerol kinase.